The following is a 247-amino-acid chain: 3-deoxy-manno-octulosonate cytidylyltransferase (247 aa).

This sequence belongs to the KdsB family.

The protein localises to the cytoplasm. It catalyses the reaction 3-deoxy-alpha-D-manno-oct-2-ulosonate + CTP = CMP-3-deoxy-beta-D-manno-octulosonate + diphosphate. The protein operates within nucleotide-sugar biosynthesis; CMP-3-deoxy-D-manno-octulosonate biosynthesis; CMP-3-deoxy-D-manno-octulosonate from 3-deoxy-D-manno-octulosonate and CTP: step 1/1. Its pathway is bacterial outer membrane biogenesis; lipopolysaccharide biosynthesis. Its function is as follows. Activates KDO (a required 8-carbon sugar) for incorporation into bacterial lipopolysaccharide in Gram-negative bacteria. The protein is 3-deoxy-manno-octulosonate cytidylyltransferase of Methylorubrum populi (strain ATCC BAA-705 / NCIMB 13946 / BJ001) (Methylobacterium populi).